Here is a 288-residue protein sequence, read N- to C-terminus: Shikimate dehydrogenase (NADP(+)) (288 aa).

Shikimate-binding positions include 14–16 and Thr-63; that span reads SIS. The Proton acceptor role is filled by Lys-67. Glu-79 lines the NADP(+) pocket. Residues Asn-88 and Asp-103 each coordinate shikimate. Residues 127-131, 151-156, and Met-219 each bind NADP(+); these read GSGGA and NRTYEK. Position 221 (Tyr-221) interacts with shikimate. Gly-242 is a binding site for NADP(+).

Belongs to the shikimate dehydrogenase family. In terms of assembly, homodimer.

It catalyses the reaction shikimate + NADP(+) = 3-dehydroshikimate + NADPH + H(+). Its pathway is metabolic intermediate biosynthesis; chorismate biosynthesis; chorismate from D-erythrose 4-phosphate and phosphoenolpyruvate: step 4/7. Its function is as follows. Involved in the biosynthesis of the chorismate, which leads to the biosynthesis of aromatic amino acids. Catalyzes the reversible NADPH linked reduction of 3-dehydroshikimate (DHSA) to yield shikimate (SA). The chain is Shikimate dehydrogenase (NADP(+)) from Caldicellulosiruptor bescii (strain ATCC BAA-1888 / DSM 6725 / KCTC 15123 / Z-1320) (Anaerocellum thermophilum).